Reading from the N-terminus, the 520-residue chain is GMP synthase [glutamine-hydrolyzing] (520 aa).

In terms of domain architecture, Glutamine amidotransferase type-1 spans 13–205 (KIIVLDYGSQ…ALNICKAKGD (193 aa)). Cysteine 90 serves as the catalytic Nucleophile. Catalysis depends on residues histidine 179 and glutamate 181. One can recognise a GMPS ATP-PPase domain in the interval 206–395 (WSMDNFIDMQ…LGMPDHIVWR (190 aa)). Residue 233-239 (SGGVDSS) coordinates ATP.

As to quaternary structure, homodimer.

It carries out the reaction XMP + L-glutamine + ATP + H2O = GMP + L-glutamate + AMP + diphosphate + 2 H(+). It functions in the pathway purine metabolism; GMP biosynthesis; GMP from XMP (L-Gln route): step 1/1. Catalyzes the synthesis of GMP from XMP. The chain is GMP synthase [glutamine-hydrolyzing] from Streptococcus pneumoniae (strain CGSP14).